The following is a 316-amino-acid chain: Taste receptor type 2 member 3 (316 aa).

The Extracellular portion of the chain corresponds to 1–6 (MMGLTE). A helical membrane pass occupies residues 7-27 (GVFLILSGTQFTLGILVNCFI). Residues 28 to 42 (ELVNGSSWFKTKRMS) are Cytoplasmic-facing. A helical membrane pass occupies residues 43–63 (LSDFIITTLALLRIILLCIIL). Topologically, residues 64–94 (TDSFLIEFSPNTHDSGIIMQIIDVSWTFTNH) are extracellular. The helical transmembrane segment at 95 to 115 (LSIWLATCLGVLYCLKIASFS) threads the bilayer. Residues 116 to 128 (HPTFLWLKWRVSR) are Cytoplasmic-facing. Residues 129–149 (VMVWMLLGALLLSCGSTASLI) traverse the membrane as a helical segment. Over 150-186 (NEFKLYSVFRGIEATRNVTEHFRKKRSEYYLIHVLGT) the chain is Extracellular. Asn-166 carries N-linked (GlcNAc...) asparagine glycosylation. The helical transmembrane segment at 187 to 207 (LWYLPPLIVSLASYSLLIFSL) threads the bilayer. The Cytoplasmic segment spans residues 208–234 (GRHTRQMLQNGTSSRDPTTEAHKRAIR). Residues 235–255 (IILSFFFLFLLYFLAFLIASF) form a helical membrane-spanning segment. Residues 256 to 266 (GNFLPKTKMAK) are Extracellular-facing. Residues 267 to 287 (MIGEVMTMFYPAGHSFILILG) form a helical membrane-spanning segment. Over 288-316 (NSKLKQTFVVMLRCESGHLKPGSKGPIFS) the chain is Cytoplasmic.

The protein belongs to the G-protein coupled receptor T2R family. Expressed in subsets of taste receptor cells of the tongue and palate epithelium and exclusively in gustducin-positive cells. Expressed in the antrum and fundus (part of the stomach), duodenum and in gastric endocrine cells.

It is found in the membrane. Its function is as follows. Gustducin-coupled receptor implicated in the perception of bitter compounds in the oral cavity and the gastrointestinal tract. Signals through PLCB2 and the calcium-regulated cation channel TRPM5. This chain is Taste receptor type 2 member 3 (TAS2R3), found in Homo sapiens (Human).